We begin with the raw amino-acid sequence, 213 residues long: Probable nicotinate-nucleotide adenylyltransferase (213 aa).

The protein belongs to the NadD family.

It carries out the reaction nicotinate beta-D-ribonucleotide + ATP + H(+) = deamido-NAD(+) + diphosphate. It participates in cofactor biosynthesis; NAD(+) biosynthesis; deamido-NAD(+) from nicotinate D-ribonucleotide: step 1/1. Functionally, catalyzes the reversible adenylation of nicotinate mononucleotide (NaMN) to nicotinic acid adenine dinucleotide (NaAD). This chain is Probable nicotinate-nucleotide adenylyltransferase, found in Trichlorobacter lovleyi (strain ATCC BAA-1151 / DSM 17278 / SZ) (Geobacter lovleyi).